Here is a 413-residue protein sequence, read N- to C-terminus: MSQAQPLLVRMMNTNIVIQILIGIIAGVALATLAPNLAISAGLFGELFVSALKAVAPILVFILVAASIANQKRGQNSNMKPVIVLYLVGTFCASLTAVVMSFLFPTTLTLVIDAATNTAPEGIVEVINTLLFKIIDNPINALMTGNFIGILGWAVALGLGLHSASDATKKIFVDLSNCISAIVTVVIRFAPIGIFGLVSHTFAETGFAVLAGYSHLLAVLLGSMAFIALIVNPLIVYIRTRRNPYPLVFLCLRESGVTAFFTRSSAANIPVNMALCERLNLHKDTYSVSIPLGATINMAGAAITITVLTLAAVNTAGVEVDLATALLLSLVAAVSACGASGVAGGSLLLIPLACSLFGISNDIAMQVVAIGFIIGVVQDSAETALNSSTDVLFTTAACRKADNPYKPLVQPTN.

Helical transmembrane passes span 15–35 (NIVIQILIGIIAGVALATLAP), 48–68 (FVSALKAVAPILVFILVAASI), 82–102 (VIVLYLVGTFCASLTAVVMSF), 141–161 (ALMTGNFIGILGWAVALGLGL), 178–198 (CISAIVTVVIRFAPIGIFGLV), 216–236 (LLAVLLGSMAFIALIVNPLIV), 290–310 (IPLGATINMAGAAITITVLTL), 330–350 (LVAAVSACGASGVAGGSLLLI), and 357–377 (FGISNDIAMQVVAIGFIIGVV).

This sequence belongs to the dicarboxylate/amino acid:cation symporter (DAACS) (TC 2.A.23) family.

The protein localises to the cell inner membrane. The enzyme catalyses L-serine(in) + Na(+)(in) = L-serine(out) + Na(+)(out). It catalyses the reaction L-threonine(in) + Na(+)(in) = L-threonine(out) + Na(+)(out). Involved in the import of serine and threonine into the cell, with the concomitant import of sodium (symport system). The polypeptide is Serine/threonine transporter SstT (Aliivibrio fischeri (strain ATCC 700601 / ES114) (Vibrio fischeri)).